Here is a 371-residue protein sequence, read N- to C-terminus: Transcriptional regulator of yeast form adherence 2 (371 aa).

A C3H1-type 1 zinc finger spans residues 16 to 44; the sequence is RNPAVLCSFYSKIGACRHGEKCSKKHLKP. Polar residues predominate over residues 94 to 107; sequence TVSQIDDSPHSNSG. The interval 94-194 is disordered; the sequence is TVSQIDDSPH…NIEDAKLEDT (101 aa). A compositionally biased stretch (acidic residues) spans 115–124; that stretch reads VETQEVETEN. Over residues 132–194 the composition is skewed to basic and acidic residues; it reads GDVKIDHNED…NIEDAKLEDT (63 aa). The RRM domain occupies 192–279; that stretch reads EDTEKDKLPE…KPVYSDLSPV (88 aa). The segment at 281-309 adopts a C3H1-type 2 zinc-finger fold; that stretch reads DFNDACCEEYRDYHDCQRGAMCNYMHVRL. Residues 337–371 are disordered; it reads ELPGDIRSSSSTNDDETNGNENGISSTMAVLEQLS. Residues 355-371 are compositionally biased toward polar residues; that stretch reads GNENGISSTMAVLEQLS.

It localises to the nucleus. In terms of biological role, transcription factor required for yeast cell adherence to silicone substrate. The sequence is that of Transcriptional regulator of yeast form adherence 2 (TRY2) from Candida albicans (strain SC5314 / ATCC MYA-2876) (Yeast).